The primary structure comprises 193 residues: CASP-like protein 1D1 (193 aa).

Residues 1 to 24 (MGYETKSTLDTERSTAPGTGTTTK) are disordered. At 1–30 (MGYETKSTLDTERSTAPGTGTTTKSCSMTQ) the chain is on the cytoplasmic side. A compositionally biased stretch (polar residues) spans 14–24 (STAPGTGTTTK). A helical membrane pass occupies residues 31 to 51 (VVLRFVLFAATLTSIVVMVTS). The Extracellular segment spans residues 52-76 (KQTKNIFLPGTPIRIPAAEFTNSPA). Residues 77-97 (LIYFVVALSVACFYSIVSTFV) form a helical membrane-spanning segment. Residues 98 to 108 (TVSAFKKHSCS) are Cytoplasmic-facing. Residues 109–129 (AVLLLNLAIMDAVMVGIVASA) form a helical membrane-spanning segment. At 130–162 (TGAGGGVAYLGLKGNKEVRWGKICHIYDKFCRH) the chain is on the extracellular side. Residues 163-183 (VGGAIAVSLFASVVLLLLSII) form a helical membrane-spanning segment. Residues 184 to 193 (SVLSLYKKIR) lie on the Cytoplasmic side of the membrane.

This sequence belongs to the Casparian strip membrane proteins (CASP) family. As to quaternary structure, homodimer and heterodimers.

The protein resides in the cell membrane. The chain is CASP-like protein 1D1 from Arabidopsis thaliana (Mouse-ear cress).